Consider the following 344-residue polypeptide: Anthranilate phosphoribosyltransferase (344 aa).

Residues G80, 83-84 (GD), T88, 90-93 (NIST), 108-116 (KHGNRSVSS), and S120 each bind 5-phospho-alpha-D-ribose 1-diphosphate. Position 80 (G80) interacts with anthranilate. Mg(2+) is bound at residue S92. N111 contacts anthranilate. Position 166 (R166) interacts with anthranilate. Positions 225 and 226 each coordinate Mg(2+).

It belongs to the anthranilate phosphoribosyltransferase family. As to quaternary structure, homodimer. Mg(2+) serves as cofactor.

The catalysed reaction is N-(5-phospho-beta-D-ribosyl)anthranilate + diphosphate = 5-phospho-alpha-D-ribose 1-diphosphate + anthranilate. It functions in the pathway amino-acid biosynthesis; L-tryptophan biosynthesis; L-tryptophan from chorismate: step 2/5. Catalyzes the transfer of the phosphoribosyl group of 5-phosphorylribose-1-pyrophosphate (PRPP) to anthranilate to yield N-(5'-phosphoribosyl)-anthranilate (PRA). This is Anthranilate phosphoribosyltransferase from Petrotoga mobilis (strain DSM 10674 / SJ95).